An 880-amino-acid polypeptide reads, in one-letter code: Protein transport protein SEC23 A (880 aa).

Residues 1 to 13 (MANLPKSSVNYPG) are compositionally biased toward polar residues. Positions 1 to 95 (MANLPKSSVN…PPGPPVFNTP (95 aa)) are disordered. Positions 20–36 (PNRPSPQPDRTPVPHSP) are enriched in pro residues. Residues 57–70 (MSSPSMKSPSLLSP) show a composition bias toward low complexity. Residues Cys204, Cys207, Cys226, and Cys229 each contribute to the Zn(2+) site. The tract at residues 204 to 229 (CLNCGAYSNPYSSILIGSGQWQCVIC) is zinc finger-like.

The protein belongs to the SEC23/SEC24 family. SEC24 subfamily. In terms of assembly, component of the coat protein complex II (COPII), composed of at least five proteins: the Sec23/24 complex, the Sec13/31 complex and Sar1. Mostly expressed in seedlings, roots, cotyledons, leaves, trichomes, leaf primordia and flowers, and, to a lower extent, in mature siliques.

The protein resides in the cytoplasmic vesicle. It localises to the COPII-coated vesicle membrane. It is found in the endoplasmic reticulum membrane. The protein localises to the membrane. Component of the coat protein complex II (COPII) which promotes the formation of transport vesicles from the endoplasmic reticulum (ER). The coat has two main functions, the physical deformation of the endoplasmic reticulum membrane into vesicles and the selection of cargo molecules. May contribute to COPII-coated vesicles formation and ER-Golgi vesicle transport. Together with SEC23D, essential for pollen wall development and exine patterning, probably by regulating endoplasmic reticulum (ER) export of lipids and proteins (e.g. sporopollenin) necessary for pollen wall formation. Also involved in plastid physiology in anther tapetal cells. This Arabidopsis thaliana (Mouse-ear cress) protein is Protein transport protein SEC23 A.